The chain runs to 513 residues: Alpha-amylase mde5 (513 aa).

A signal peptide spans 1 to 25 (MKHNEVFGWTLKVLSFLLVVIPANA). A disulfide bond links C52 and C60. Substrate is bound at residue W105. N143 contacts Ca(2+). Residue H144 coordinates substrate. N162 carries N-linked (GlcNAc...) asparagine glycosylation. The cysteines at positions 171 and 184 are disulfide-linked. Ca(2+) contacts are provided by E182 and D195. Substrate is bound at residue R224. The Ca(2+) site is built by D226, H230, and E250. Catalysis depends on D226, which acts as the Nucleophile. 229–230 (KH) contributes to the substrate binding site. The active-site Proton donor is E250. G254 serves as a coordination point for substrate. C260 and C304 are joined by a disulfide. D318 contacts substrate. The N-linked (GlcNAc...) asparagine glycan is linked to N357. R365 contributes to the substrate binding site. C454 and C488 form a disulfide bridge.

The protein belongs to the glycosyl hydrolase 13 family. Ca(2+) is required as a cofactor.

Its subcellular location is the endoplasmic reticulum. The enzyme catalyses Endohydrolysis of (1-&gt;4)-alpha-D-glucosidic linkages in polysaccharides containing three or more (1-&gt;4)-alpha-linked D-glucose units.. This is Alpha-amylase mde5 (mde5) from Schizosaccharomyces pombe (strain 972 / ATCC 24843) (Fission yeast).